A 359-amino-acid chain; its full sequence is Probable dual-specificity RNA methyltransferase RlmN (359 aa).

Glu-100 serves as the catalytic Proton acceptor. The 235-residue stretch at 106 to 340 folds into the Radical SAM core domain; the sequence is TDKRLTVCVS…VSVRASRGRD (235 aa). Cys-113 and Cys-345 are oxidised to a cystine. 3 residues coordinate [4Fe-4S] cluster: Cys-120, Cys-124, and Cys-127. S-adenosyl-L-methionine is bound by residues 167-168, Ser-197, 226-228, and Asn-302; these read GE and SLH. The S-methylcysteine intermediate role is filled by Cys-345.

Belongs to the radical SAM superfamily. RlmN family. The cofactor is [4Fe-4S] cluster.

It is found in the cytoplasm. It carries out the reaction adenosine(2503) in 23S rRNA + 2 reduced [2Fe-2S]-[ferredoxin] + 2 S-adenosyl-L-methionine = 2-methyladenosine(2503) in 23S rRNA + 5'-deoxyadenosine + L-methionine + 2 oxidized [2Fe-2S]-[ferredoxin] + S-adenosyl-L-homocysteine. The enzyme catalyses adenosine(37) in tRNA + 2 reduced [2Fe-2S]-[ferredoxin] + 2 S-adenosyl-L-methionine = 2-methyladenosine(37) in tRNA + 5'-deoxyadenosine + L-methionine + 2 oxidized [2Fe-2S]-[ferredoxin] + S-adenosyl-L-homocysteine. In terms of biological role, specifically methylates position 2 of adenine 2503 in 23S rRNA and position 2 of adenine 37 in tRNAs. This chain is Probable dual-specificity RNA methyltransferase RlmN, found in Prochlorococcus marinus (strain NATL2A).